A 392-amino-acid chain; its full sequence is Nicotinate phosphoribosyltransferase (392 aa).

The residue at position 216 (His216) is a Phosphohistidine; by autocatalysis.

It belongs to the NAPRTase family. Transiently phosphorylated on a His residue during the reaction cycle. Phosphorylation strongly increases the affinity for substrates and increases the rate of nicotinate D-ribonucleotide production. Dephosphorylation regenerates the low-affinity form of the enzyme, leading to product release.

The enzyme catalyses nicotinate + 5-phospho-alpha-D-ribose 1-diphosphate + ATP + H2O = nicotinate beta-D-ribonucleotide + ADP + phosphate + diphosphate. Its pathway is cofactor biosynthesis; NAD(+) biosynthesis; nicotinate D-ribonucleotide from nicotinate: step 1/1. Catalyzes the synthesis of beta-nicotinate D-ribonucleotide from nicotinate and 5-phospho-D-ribose 1-phosphate at the expense of ATP. In Cupriavidus necator (strain ATCC 17699 / DSM 428 / KCTC 22496 / NCIMB 10442 / H16 / Stanier 337) (Ralstonia eutropha), this protein is Nicotinate phosphoribosyltransferase.